Reading from the N-terminus, the 533-residue chain is Lysophosphatidylcholine acyltransferase (533 aa).

Over Met1 to Arg79 the chain is Cytoplasmic. A helical; Signal-anchor for type II membrane protein transmembrane segment spans residues Val80–Gly100. Topologically, residues Met101–Asn533 are lumenal. An HXXXXD motif motif is present at residues His158–Asp163. EF-hand domains are found at residues Leu402 to Lys437, Ser439 to Lys474, and Leu475 to Ser510.

This sequence belongs to the 1-acyl-sn-glycerol-3-phosphate acyltransferase family.

Its subcellular location is the endoplasmic reticulum membrane. It localises to the golgi apparatus membrane. It is found in the lipid droplet. It catalyses the reaction a 1-acyl-sn-glycero-3-phosphocholine + an acyl-CoA = a 1,2-diacyl-sn-glycero-3-phosphocholine + CoA. It functions in the pathway lipid metabolism; phospholipid metabolism. Its function is as follows. Acetyltransferase which mediates the conversion of 1-acyl-sn-glycero-3-phosphocholine (LPC) into phosphatidylcholine (PC). Has a calcium-independent activity. Displays a clear preference for saturated fatty acyl-CoAs, and 1-myristoyl or 1-palmitoyl LPC as acyl donors and acceptors, respectively. Involved in the regulation of lipid droplet number and size. The polypeptide is Lysophosphatidylcholine acyltransferase (Drosophila melanogaster (Fruit fly)).